A 162-amino-acid chain; its full sequence is Interleukin-15 (162 aa).

Positions 1 to 29 (MRISKPHLRITSIQCYVCLLLNTHFLTEA) are cleaved as a signal peptide. A propeptide spanning residues 30–48 (GIRVFILGCISAGIPKTEA) is cleaved from the precursor. 2 disulfides stabilise this stretch: Cys-83–Cys-133 and Cys-90–Cys-136. Residues Asn-119, Asn-127, and Asn-143 are each glycosylated (N-linked (GlcNAc...) asparagine).

It belongs to the IL-15/IL-21 family.

It is found in the secreted. Its function is as follows. Cytokine that plays a major role in the development of inflammatory and protective immune responses to microbial invaders and parasites by modulating immune cells of both the innate and adaptive immune systems. Stimulates the proliferation of natural killer cells, T-cells and B-cells and promotes the secretion of several cytokines. In monocytes, induces the production of IL8 and monocyte chemotactic protein 1/CCL2, two chemokines that attract neutrophils and monocytes respectively to sites of infection. Unlike most cytokines, which are secreted in soluble form, IL15 is expressed in association with its high affinity IL15RA on the surface of IL15-producing cells and delivers signals to target cells that express IL2RB and IL2RG receptor subunits. Binding to its receptor triggers the phosphorylation of JAK1 and JAK3 and the recruitment and subsequent phosphorylation of signal transducer and activator of transcription-3/STAT3 and STAT5. In mast cells, induces the rapid tyrosine phosphorylation of STAT6 and thereby controls mast cell survival and release of cytokines such as IL4. The polypeptide is Interleukin-15 (IL15) (Marmota himalayana (Himalayan marmot)).